Reading from the N-terminus, the 110-residue chain is Large ribosomal subunit protein P2B (110 aa).

The segment covering 73 to 88 (TPAAGGAAGAEATSAA) has biased composition (low complexity). The interval 73–110 (TPAAGGAAGAEATSAAEEAKEEEAAEESDEDMGFGLFD) is disordered. A compositionally biased stretch (acidic residues) spans 91-104 (AKEEEAAEESDEDM). S100 bears the Phosphoserine mark.

Belongs to the eukaryotic ribosomal protein P1/P2 family. Component of the large ribosomal subunit (LSU). Mature yeast ribosomes consist of a small (40S) and a large (60S) subunit. The 40S small subunit contains 1 molecule of ribosomal RNA (18S rRNA) and at least 33 different proteins. The large 60S subunit contains 3 rRNA molecules (25S, 5.8S and 5S rRNA) and at least 46 different proteins. The acidic ribosomal P-proteins form the stalk structure of the 60S subunit. They are organized as a pentameric complex in which uL10/P0 interacts with 2 heterodimers of P1 and P2 proteins.

The protein resides in the cytoplasm. Functionally, component of the ribosome, a large ribonucleoprotein complex responsible for the synthesis of proteins in the cell. The small ribosomal subunit (SSU) binds messenger RNAs (mRNAs) and translates the encoded message by selecting cognate aminoacyl-transfer RNA (tRNA) molecules. The large subunit (LSU) contains the ribosomal catalytic site termed the peptidyl transferase center (PTC), which catalyzes the formation of peptide bonds, thereby polymerizing the amino acids delivered by tRNAs into a polypeptide chain. The nascent polypeptides leave the ribosome through a tunnel in the LSU and interact with protein factors that function in enzymatic processing, targeting, and the membrane insertion of nascent chains at the exit of the ribosomal tunnel. This is Large ribosomal subunit protein P2B (rpp202) from Schizosaccharomyces pombe (strain 972 / ATCC 24843) (Fission yeast).